Consider the following 475-residue polypeptide: BTB/POZ domain-containing protein 10 (475 aa).

The disordered stretch occupies residues 1–143; the sequence is MAGRPHPYDG…SSQSSSDGSC (143 aa). A compositionally biased stretch (basic residues) spans 22–31; sequence LHSRPRKLYK. A compositionally biased stretch (basic and acidic residues) spans 57–80; the sequence is GHERSRDRRRSSDRSRDSSHERTE. Residues 81–94 show a composition bias toward polar residues; sequence SQLTPCIRNVTSPT. Basic and acidic residues predominate over residues 97 to 107; the sequence is HHVEREKDHSS. The segment covering 108-142 has biased composition (low complexity); that stretch reads SRPSSPRPQKASPNGSISSAGNSSRNSSQSSSDGS. An interaction with AKT family members region spans residues 146–475; the sequence is AGEMVFVYEN…LDPDAQNPML (330 aa). The 75-residue stretch at 167-241 folds into the BTB domain; sequence ERVTLIVDNT…YKTGIIRCPD (75 aa). Residues 455–475 form a disordered region; sequence LPIHPPSGNSDLDPDAQNPML.

Interacts (via C-terminal 330-amino-acid region) with AKT1; AKT2 and AKT3. Interacts with PPP2CA and PPP1CA. As to expression, ubiquitously expressed. Highly expressed in adult brain, testis, aorta and small intestine and weakly expressed in the heart, lung, liver, kidney, pancreas, spleen, thymus, prostate, ovary and colon. Down-regulated in glioma.

Its subcellular location is the nucleus. It is found in the cytoplasm. In terms of biological role, plays a major role as an activator of AKT family members by inhibiting PPP2CA-mediated dephosphorylation, thereby keeping AKTs activated. Plays a role in preventing motor neuronal death and accelerating the growth of pancreatic beta cells. This Homo sapiens (Human) protein is BTB/POZ domain-containing protein 10 (BTBD10).